The primary structure comprises 198 residues: Putative NADH dehydrogenase/NAD(P)H nitroreductase XOO4267 (198 aa).

Belongs to the nitroreductase family. HadB/RutE subfamily. It depends on FMN as a cofactor.

This is Putative NADH dehydrogenase/NAD(P)H nitroreductase XOO4267 from Xanthomonas oryzae pv. oryzae (strain KACC10331 / KXO85).